Here is a 360-residue protein sequence, read N- to C-terminus: DNA replication and repair protein RecF (360 aa).

Residue 30 to 37 coordinates ATP; the sequence is GHNGSGKT.

Belongs to the RecF family.

It localises to the cytoplasm. The RecF protein is involved in DNA metabolism; it is required for DNA replication and normal SOS inducibility. RecF binds preferentially to single-stranded, linear DNA. It also seems to bind ATP. The sequence is that of DNA replication and repair protein RecF from Shewanella pealeana (strain ATCC 700345 / ANG-SQ1).